Here is a 190-residue protein sequence, read N- to C-terminus: Flavodoxin-like domain-containing protein BilS (190 aa).

It participates in porphyrin-containing compound metabolism; protoheme degradation. Its function is as follows. Together with BilR, catalyzes reduction of mesobilirubin and/or bilirubin to urobilinogen, a key step during heme degradation. BilS is probably involved in electron transfer for the bilirubin reductase BilR. This is Flavodoxin-like domain-containing protein BilS from Clostridium symbiosum (strain WAL-14163).